Reading from the N-terminus, the 385-residue chain is uncharacterized protein (385 aa).

This sequence belongs to the peptidase M20 family.

This is an uncharacterized protein from Staphylococcus saprophyticus subsp. saprophyticus (strain ATCC 15305 / DSM 20229 / NCIMB 8711 / NCTC 7292 / S-41).